An 873-amino-acid chain; its full sequence is DNA helicase/primase complex-associated protein (873 aa).

The interval 394-422 is disordered; the sequence is PPLPRDDGDGENNVVEVSSSTGGAHPPSD.

The protein belongs to the herpesviridae HEPA family. Associates with the primase and the helicase to form the helicase-primase complex. Interacts with the origin-binding protein. Interacts with the polymerase catalytic subunit.

The protein localises to the host nucleus. Its function is as follows. Component of the helicase/primase complex. Unwinds the DNA at the replication forks and generates single-stranded DNA for both leading and lagging strand synthesis. The primase synthesizes short RNA primers on the lagging strand that the polymerase presumably elongates using dNTPs. The primase-associated factor has no known catalytic activity in the complex and may serve to facilitate the formation of the replisome by directly interacting with the origin-binding protein and the polymerase. The sequence is that of DNA helicase/primase complex-associated protein (UL102) from Human cytomegalovirus (strain Merlin) (HHV-5).